A 168-amino-acid chain; its full sequence is Ribosome maturation factor RimM (168 aa).

The 76-residue stretch at 93-168 (EDEFYQSDLV…IVLNIPEFID (76 aa)) folds into the PRC barrel domain.

The protein belongs to the RimM family. As to quaternary structure, binds ribosomal protein uS19.

It is found in the cytoplasm. Its function is as follows. An accessory protein needed during the final step in the assembly of 30S ribosomal subunit, possibly for assembly of the head region. Essential for efficient processing of 16S rRNA. May be needed both before and after RbfA during the maturation of 16S rRNA. It has affinity for free ribosomal 30S subunits but not for 70S ribosomes. In Wolbachia pipientis wMel, this protein is Ribosome maturation factor RimM.